A 158-amino-acid polypeptide reads, in one-letter code: Complexin-3 (158 aa).

Residues 14–47 (KNLTGSLGGGEDKGDGDKSAAEAQGMSREEYEEY) form a disordered region. Basic and acidic residues predominate over residues 23-33 (GEDKGDGDKSA). Residues 39 to 74 (MSREEYEEYQKQLVEEKMERDAQFTQRKAERATLRS) adopt a coiled-coil conformation. Cys155 is modified (cysteine methyl ester). Residue Cys155 is the site of S-farnesyl cysteine attachment. Residues 156–158 (HIM) constitute a propeptide, removed in mature form.

Belongs to the complexin/synaphin family. Binds to the SNARE core complex containing SNAP25, VAMP2 and STX1A. Post-translationally, farnesylation mediates presynaptic targeting. As to expression, present in many brain regions, including hippocampus and cerebellum (at protein level). Expressed in the retina (at protein level). Expressed in retinal amacrine cells (at protein level). Expressed in retinal photoreceptor ribbon synapses. Expressed in the retinal inner nuclear layer, at bipolar cells (at protein level). Expressed in cone photoreceptor synaptic terminals (at protein level).

It localises to the synapse. The protein resides in the cell membrane. In terms of biological role, complexin that regulates SNARE protein complex-mediated synaptic vesicle fusion. Required for the maintenance of synaptic ultrastructure in the adult retina. Positively regulates synaptic transmission through synaptic vesicle availability and exocytosis of neurotransmitters at photoreceptor ribbon synapses in the retina. Suppresses tonic photoreceptor activity and baseline 'noise' by suppression of Ca(2+) vesicle tonic release and the facilitation of evoked synchronous and asynchronous Ca(2+) vesicle release. In Mus musculus (Mouse), this protein is Complexin-3 (Cplx3).